Reading from the N-terminus, the 132-residue chain is Small ribosomal subunit protein uS8 (132 aa).

It belongs to the universal ribosomal protein uS8 family. Part of the 30S ribosomal subunit. Contacts proteins S5 and S12.

Its function is as follows. One of the primary rRNA binding proteins, it binds directly to 16S rRNA central domain where it helps coordinate assembly of the platform of the 30S subunit. This chain is Small ribosomal subunit protein uS8, found in Aliarcobacter butzleri (strain RM4018) (Arcobacter butzleri).